The following is a 328-amino-acid chain: Malate dehydrogenase (328 aa).

12 to 18 (GAAGQIA) is a binding site for NAD(+). Residues Arg-93 and Arg-99 each contribute to the substrate site. Residues Asn-106, Gln-113, and 130-132 (VGN) contribute to the NAD(+) site. Substrate-binding residues include Asn-132 and Arg-163. His-188 acts as the Proton acceptor in catalysis.

This sequence belongs to the LDH/MDH superfamily. MDH type 2 family.

It catalyses the reaction (S)-malate + NAD(+) = oxaloacetate + NADH + H(+). Its function is as follows. Catalyzes the reversible oxidation of malate to oxaloacetate. This chain is Malate dehydrogenase, found in Burkholderia cenocepacia (strain ATCC BAA-245 / DSM 16553 / LMG 16656 / NCTC 13227 / J2315 / CF5610) (Burkholderia cepacia (strain J2315)).